The primary structure comprises 273 residues: MAATVPRFDDVYKNAQRRILDQETFFSRGLSRPLMKNTYLFDNYAYGWIPETAIWSSRYANLDASDYYPISLGLLKKFEFLMSLYKGPIPVYEEKVNTEFIANGSFSGRYVSYLRKFSALPTNEFISFLLLTSIPIYNILFWFKNTQFDITKHTLFRYVYTDNAKHLALARYMHQTGDYKPLFSRLKENYIFTGPVPIGIKDINHPNLSRARSPSDYETLANISTILYFTKYDPVLMFLLFYVPGYSITTKITPAVEYLMDKLNLTKSDVQLL.

The next 2 membrane-spanning stretches (helical) occupy residues 123 to 143 and 238 to 260; these read NEFISFLLLTSIPIYNILFWF and FLLFYVPGYSITTKITPAVEYLM.

The protein belongs to the orthopoxvirus OPG070 family. In terms of processing, phosphorylated by OPG054/F10L kinase in vitro.

It is found in the virion. It localises to the host endoplasmic reticulum membrane. The protein localises to the host cytoplasm. May play a role in the biogenesis of the viral factories by recruiting and wrapping DNA replication sites in endoplasmic reticulum derived membranes. Later in infection, phosphorylation by the late viral kinase OPG054/F10L might decrease DNA-binding ability and trigger ER membranes disassembly. Binds DNA in vitro. In Vaccinia virus (strain Western Reserve) (VACV), this protein is Protein OPG070 (OPG070).